The primary structure comprises 154 residues: uncharacterized protein (154 aa).

Transmembrane regions (helical) follow at residues 20–42, 62–84, 91–109, and 113–132; these read FRLF…GQFG, FFGY…AVLL, ALGA…LINY, and IGVQ…LLWM.

It localises to the cell membrane. This is an uncharacterized protein from Bacillus subtilis (strain 168).